The chain runs to 255 residues: Leucyl/phenylalanyl-tRNA--protein transferase (255 aa).

The protein belongs to the L/F-transferase family.

Its subcellular location is the cytoplasm. The catalysed reaction is N-terminal L-lysyl-[protein] + L-leucyl-tRNA(Leu) = N-terminal L-leucyl-L-lysyl-[protein] + tRNA(Leu) + H(+). The enzyme catalyses N-terminal L-arginyl-[protein] + L-leucyl-tRNA(Leu) = N-terminal L-leucyl-L-arginyl-[protein] + tRNA(Leu) + H(+). It carries out the reaction L-phenylalanyl-tRNA(Phe) + an N-terminal L-alpha-aminoacyl-[protein] = an N-terminal L-phenylalanyl-L-alpha-aminoacyl-[protein] + tRNA(Phe). Functionally, functions in the N-end rule pathway of protein degradation where it conjugates Leu, Phe and, less efficiently, Met from aminoacyl-tRNAs to the N-termini of proteins containing an N-terminal arginine or lysine. This chain is Leucyl/phenylalanyl-tRNA--protein transferase, found in Burkholderia pseudomallei (strain 1106a).